The following is a 366-amino-acid chain: Glutamate 5-kinase (366 aa).

Lysine 17 contacts ATP. Residues serine 57, aspartate 144, and asparagine 156 each coordinate substrate. ATP is bound by residues 176-177 and 216-222; these read SD and TGGMASK. The PUA domain maps to 278–352; that stretch reads QGILHIDEGA…GKSTQELPAE (75 aa).

It belongs to the glutamate 5-kinase family.

It localises to the cytoplasm. It catalyses the reaction L-glutamate + ATP = L-glutamyl 5-phosphate + ADP. The protein operates within amino-acid biosynthesis; L-proline biosynthesis; L-glutamate 5-semialdehyde from L-glutamate: step 1/2. In terms of biological role, catalyzes the transfer of a phosphate group to glutamate to form L-glutamate 5-phosphate. The sequence is that of Glutamate 5-kinase from Rhodococcus jostii (strain RHA1).